The chain runs to 448 residues: Asparagine--tRNA ligase (448 aa).

This sequence belongs to the class-II aminoacyl-tRNA synthetase family. Homodimer.

The protein localises to the cytoplasm. It carries out the reaction tRNA(Asn) + L-asparagine + ATP = L-asparaginyl-tRNA(Asn) + AMP + diphosphate + H(+). In Streptococcus pyogenes serotype M12 (strain MGAS9429), this protein is Asparagine--tRNA ligase.